Here is an 823-residue protein sequence, read N- to C-terminus: Leucine--tRNA ligase (823 aa).

Residues 42–52 carry the 'HIGH' region motif; it reads PYPSGTLHMGH. The 'KMSKS' region motif lies at 575-579; the sequence is KMSKS. Residue Lys578 coordinates ATP.

This sequence belongs to the class-I aminoacyl-tRNA synthetase family.

The protein resides in the cytoplasm. It catalyses the reaction tRNA(Leu) + L-leucine + ATP = L-leucyl-tRNA(Leu) + AMP + diphosphate. The polypeptide is Leucine--tRNA ligase (Legionella pneumophila subsp. pneumophila (strain Philadelphia 1 / ATCC 33152 / DSM 7513)).